The following is a 305-amino-acid chain: FMRFamide-related peptides type HF-4 (305 aa).

The first 19 residues, 1–19, serve as a signal peptide directing secretion; that stretch reads MTSLCLTIAPAVLSLICLS. 3 positions are modified to phenylalanine amide: F36, F47, and F66. I75 is subject to Isoleucine amide. Residues F84 and F93 each carry the phenylalanine amide modification. The residue at position 102 (I102) is an Isoleucine amide. F111, F120, F129, F138, F147, F156, and F165 each carry phenylalanine amide. Positions 168 to 305 are excised as a propeptide; it reads SVDGEIEAGV…EHKQEYMRFG (138 aa).

The protein belongs to the FARP (FMRFamide related peptide) family. In terms of tissue distribution, central nervous system.

It is found in the secreted. Can function as both cardioregulatory hormones and transmitters and may regulate cardiovascular function. The protein is FMRFamide-related peptides type HF-4 of Cornu aspersum (Brown garden snail).